The chain runs to 79 residues: Dolichyl-diphosphooligosaccharide--protein glycosyltransferase subunit TMEM258 (79 aa).

A run of 2 helical transmembrane segments spans residues 17-37 and 55-75; these read VFPH…AWFF and LISL…LLWV.

Belongs to the OST5 family. In terms of assembly, component of the oligosaccharyltransferase (OST) complex.

Its subcellular location is the membrane. It localises to the endoplasmic reticulum. It is found in the cytoplasm. It functions in the pathway protein modification; protein glycosylation. Subunit of the oligosaccharyl transferase (OST) complex that catalyzes the initial transfer of a defined glycan (Glc(3)Man(9)GlcNAc(2) in eukaryotes) from the lipid carrier dolichol-pyrophosphate to an asparagine residue within an Asn-X-Ser/Thr consensus motif in nascent polypeptide chains, the first step in protein N-glycosylation. N-glycosylation occurs cotranslationally and the complex associates with the Sec61 complex at the channel-forming translocon complex that mediates protein translocation across the endoplasmic reticulum (ER). All subunits are required for a maximal enzyme activity. The chain is Dolichyl-diphosphooligosaccharide--protein glycosyltransferase subunit TMEM258 from Xenopus laevis (African clawed frog).